Here is a 936-residue protein sequence, read N- to C-terminus: Aconitate hydratase A (936 aa).

A disordered region spans residues 401–449 (VTPDFDAEGPATENTSAQTAGTPASAADAKGNIPSAAAGAEGRPSNPVT). The segment covering 412–422 (TENTSAQTAGT) has biased composition (polar residues). [4Fe-4S] cluster-binding residues include Cys472, Cys538, and Cys541.

The protein belongs to the aconitase/IPM isomerase family. As to quaternary structure, monomer. [4Fe-4S] cluster is required as a cofactor.

It catalyses the reaction citrate = D-threo-isocitrate. The catalysed reaction is (2S,3R)-3-hydroxybutane-1,2,3-tricarboxylate = 2-methyl-cis-aconitate + H2O. It functions in the pathway carbohydrate metabolism; tricarboxylic acid cycle; isocitrate from oxaloacetate: step 2/2. Its pathway is organic acid metabolism; propanoate degradation. Its function is as follows. Involved in the catabolism of short chain fatty acids (SCFA) via the tricarboxylic acid (TCA)(acetyl degradation route) and probably via the 2-methylcitrate cycle I (propionate degradation route). Catalyzes the reversible isomerization of citrate to isocitrate via cis-aconitate. Could catalyze the hydration of 2-methyl-cis-aconitate to yield (2R,3S)-2-methylisocitrate. The apo form of AcnA functions as a RNA-binding regulatory protein. The protein is Aconitate hydratase A (acn) of Corynebacterium jeikeium (strain K411).